The following is a 266-amino-acid chain: Potassium/proton antiporter CemA (266 aa).

3 consecutive transmembrane segments (helical) span residues 46-66 (VIVSVRCLITLIFVPLFINIL), 151-171 (FLSFLSLSVVFLLLKPQIIIL), and 226-246 (FMSLFVATFPVFLDTVFKYWI).

The protein belongs to the CemA family.

It localises to the plastid. Its subcellular location is the chloroplast inner membrane. It catalyses the reaction K(+)(in) + H(+)(out) = K(+)(out) + H(+)(in). Functionally, contributes to K(+)/H(+) antiport activity by supporting proton efflux to control proton extrusion and homeostasis in chloroplasts in a light-dependent manner to modulate photosynthesis. Prevents excessive induction of non-photochemical quenching (NPQ) under continuous-light conditions. Indirectly promotes efficient inorganic carbon uptake into chloroplasts. This chain is Potassium/proton antiporter CemA, found in Chlorella vulgaris (Green alga).